The sequence spans 110 residues: Large ribosomal subunit protein uL22 (110 aa).

The protein belongs to the universal ribosomal protein uL22 family. As to quaternary structure, part of the 50S ribosomal subunit.

This protein binds specifically to 23S rRNA; its binding is stimulated by other ribosomal proteins, e.g. L4, L17, and L20. It is important during the early stages of 50S assembly. It makes multiple contacts with different domains of the 23S rRNA in the assembled 50S subunit and ribosome. Its function is as follows. The globular domain of the protein is located near the polypeptide exit tunnel on the outside of the subunit, while an extended beta-hairpin is found that lines the wall of the exit tunnel in the center of the 70S ribosome. The chain is Large ribosomal subunit protein uL22 from Photorhabdus laumondii subsp. laumondii (strain DSM 15139 / CIP 105565 / TT01) (Photorhabdus luminescens subsp. laumondii).